Here is a 384-residue protein sequence, read N- to C-terminus: PqqA peptide cyclase (384 aa).

A Radical SAM core domain is found at Ile14 to Gln230. [4Fe-4S] cluster-binding residues include Cys28, Cys32, and Cys35.

This sequence belongs to the radical SAM superfamily. PqqE family. As to quaternary structure, interacts with PqqD. The interaction is necessary for activity of PqqE. [4Fe-4S] cluster serves as cofactor.

The enzyme catalyses [PQQ precursor protein] + S-adenosyl-L-methionine = E-Y cross-linked-[PQQ precursor protein] + 5'-deoxyadenosine + L-methionine + H(+). Its pathway is cofactor biosynthesis; pyrroloquinoline quinone biosynthesis. Its function is as follows. Catalyzes the cross-linking of a glutamate residue and a tyrosine residue in the PqqA protein as part of the biosynthesis of pyrroloquinoline quinone (PQQ). In Methylorubrum extorquens (strain CM4 / NCIMB 13688) (Methylobacterium extorquens), this protein is PqqA peptide cyclase.